Here is a 471-residue protein sequence, read N- to C-terminus: MSPQTETKASVGFKAGVKDYKLTYYTPDYETKDTDILAAFRVTPQPGVPPEEAGAAVAAESSTGTWTTVWTDGLTSLDRYKGRCYHIETVVGEENQYIAYVAYPLDLFEEGSVTNMFTSIVGNVFGFKALRALRLEDLRIPTSYSKTFQGPPHGIQVERDKLNKYGRPLLGCTIKPKLGLSAKNYGRAVYECLRGGLDFTKDDENVNSQPFMRWRDRFLFCTEALYKAQTETGEIKGHYLNATAGTCEEMMKRAVFARELGVPIVMHDYLTGGFTANTSLAHYCRDNGLLLHIHRAMHAVIDRQKNHGMHFRVLAKALRMSGGDHIHAGTVVGKLEGEREMTLGFVDLLRDDFIEKDRSRGIFFTQDWVSMPGVIPVASGGIHVWHMPALTEIFGDDSVLQFGGGTLGHPWGNAPGAVANRVALEACVQARNEGRDLAREGNEIIREASKWSPELAAACEVWKAIKFDSNQ.

The propeptide occupies 1-2 (MS). N-acetylproline is present on Pro-3. The residue at position 14 (Lys-14) is an N6,N6,N6-trimethyllysine. Positions 123 and 173 each coordinate substrate. The active-site Proton acceptor is Lys-175. Lys-177 is a binding site for substrate. Residues Lys-201, Asp-203, and Glu-204 each coordinate Mg(2+). Residue Lys-201 is modified to N6-carboxylysine. His-294 serves as the catalytic Proton acceptor. 3 residues coordinate substrate: Arg-295, His-327, and Ser-379.

The protein belongs to the RuBisCO large chain family. Type I subfamily. As to quaternary structure, heterohexadecamer of 8 large chains and 8 small chains; disulfide-linked. The disulfide link is formed within the large subunit homodimers. Requires Mg(2+) as cofactor. The disulfide bond which can form in the large chain dimeric partners within the hexadecamer appears to be associated with oxidative stress and protein turnover.

It localises to the plastid. The protein localises to the chloroplast. The enzyme catalyses 2 (2R)-3-phosphoglycerate + 2 H(+) = D-ribulose 1,5-bisphosphate + CO2 + H2O. It catalyses the reaction D-ribulose 1,5-bisphosphate + O2 = 2-phosphoglycolate + (2R)-3-phosphoglycerate + 2 H(+). Its function is as follows. RuBisCO catalyzes two reactions: the carboxylation of D-ribulose 1,5-bisphosphate, the primary event in carbon dioxide fixation, as well as the oxidative fragmentation of the pentose substrate in the photorespiration process. Both reactions occur simultaneously and in competition at the same active site. The protein is Ribulose bisphosphate carboxylase large chain of Drymophloeus subdistichus (Palm tree).